Consider the following 781-residue polypeptide: AP-3 complex subunit beta (781 aa).

HEAT repeat units lie at residues 113-151 (PNLA…ASLY), 153-186 (IILH…EQGI), 187-224 (SIKD…QELQ), 294-332 (DHDL…PKTF), and 521-559 (PRIC…HDVD). Disordered stretches follow at residues 694–713 (KPKR…TSSH) and 731–781 (ARQS…ETTE). Residues 699-712 (ASVSSVPSNTFTSS) show a composition bias toward polar residues. Over residues 746 to 758 (STSEETDHTDDES) the composition is skewed to acidic residues. Low complexity predominate over residues 759 to 774 (GSSSGDESTESSYVSS).

This sequence belongs to the adaptor complexes large subunit family. Adaptor protein complex 3 (AP-3) is a heterotetramer composed of 2 large adaptins (APL5 and APL6), a medium adaptin (APM3) and a small adaptin (APS3).

It localises to the golgi apparatus. Its subcellular location is the cytoplasmic vesicle. The protein localises to the clathrin-coated vesicle membrane. In terms of biological role, part of the AP-3 complex, an adaptor-related complex which is not clathrin-associated. The complex is associated with the Golgi region as well as more peripheral structures. It facilitates the budding of vesicles from the Golgi membrane and may be directly involved in trafficking to the vacuole. In Eremothecium gossypii (strain ATCC 10895 / CBS 109.51 / FGSC 9923 / NRRL Y-1056) (Yeast), this protein is AP-3 complex subunit beta (APL6).